A 1576-amino-acid polypeptide reads, in one-letter code: eIF-2-alpha kinase GCN2 (1576 aa).

An RWD domain is found at 16–127; that stretch reads NEIEALKAIF…SIVQDYLNDW (112 aa). The disordered stretch occupies residues 180-204; it reads QDELQRRSYETPQSSSKKKTNSKET. 2 consecutive Protein kinase domains span residues 235–511 and 556–928; these read VLPL…HVIR and FEEL…EEFI. ATP is bound by residues 562 to 570 and Lys-585; that span reads LGRGGFGEV. Residues 673-714 are disordered; it reads YNSSADEEDPEASDISFQYSNTSDKEGSSDKDSSIEEASSVK. Basic and acidic residues predominate over residues 695–706; it reads SDKEGSSDKDSS. The active-site Proton acceptor is the Asp-772.

This sequence belongs to the protein kinase superfamily. Ser/Thr protein kinase family. GCN2 subfamily. In terms of assembly, homodimer; homodimerization is important for kinase activation by uncharged tRNAs. Interacts (via N-terminal RWD domain) with gcn1 (via N- and C-terminus); this interaction stimulates gcn2 kinase activity in a gcn20-dependent manner in response to amino acid starvation. Interacts (via N-terminus) with the gcn1-gcn20 complex on translating ribosomes in amino acid-starved cells; gcn1 may bind near the ribosomal A-site and promotes the transfer of uncharged tRNAs from the A-site to the tRNA-binding domain in gcn2 for its subsequent kinase activation, and hence allowing fil1 translational activation and derepression of amino acid biosynthetic genes. In terms of processing, autophosphorylated.

The protein localises to the cytoplasm. It carries out the reaction L-seryl-[protein] + ATP = O-phospho-L-seryl-[protein] + ADP + H(+). The catalysed reaction is L-threonyl-[protein] + ATP = O-phospho-L-threonyl-[protein] + ADP + H(+). Its activity is regulated as follows. The integrated stress response (ISR) is activated in response to conditions that promote ribosome collisions: gcn1, which acts as a ribosome collision sensor, activates gcn2. The RQC pathway and the integrated stress response (ISR) antagonize each other: hel2 prevents the activation of gcn2, while gcn2 suppresses RQC activation. Ribosome stalling-induced integrated stress response prefers ribosomes with empty A sites. The kinase activity is stimulated upon binding to uncharged tRNAs. In terms of biological role, metabolic-stress sensing protein kinase that phosphorylates the alpha subunit of eukaryotic translation initiation factor 2 (eIF-2-alpha/SUI2) on 'Ser-52' in response to low amino acid, carbon, or purine availability. Required for adapatation to nutrient starvation by acting as a key component of the integrated stress response (ISR), by which cells alter their translational and transcriptional output in response to starvation. Converts phosphorylated eIF-2-alpha/SUI2 either to a competitive inhibitor of translation initiation factor eIF-2B, leading to a global protein synthesis repression, and thus to a reduced overall utilization of amino acids, or to a translational initiation activation of specific mRNAs, such as the transcriptional activator GCN4, and hence allowing GCN4-mediated reprogramming of transcription to alleviate nutrient depletion. Binds uncharged tRNAs. In Schizosaccharomyces pombe (strain 972 / ATCC 24843) (Fission yeast), this protein is eIF-2-alpha kinase GCN2.